The chain runs to 64 residues: Putative antitoxin AF_1074 (64 aa).

It belongs to the UPF0165 family.

Functionally, possibly the antitoxin component of a type II toxin-antitoxin (TA) system. In Archaeoglobus fulgidus (strain ATCC 49558 / DSM 4304 / JCM 9628 / NBRC 100126 / VC-16), this protein is Putative antitoxin AF_1074.